Reading from the N-terminus, the 372-residue chain is Monocyte differentiation antigen CD14 (372 aa).

An N-terminal signal peptide occupies residues 1–17 (MKLMLGLLLLPLTLVHA). Intrachain disulfides connect Cys25/Cys38 and Cys36/Cys53. Asn39 and Asn46 each carry an N-linked (GlcNAc...) asparagine glycan. 11 LRR repeats span residues 57-84 (EDVEFYGGGRSLEYLLKRVDTEANLGQY), 85-120 (TDIIRSLPLKRLTVRSARVPTQILFGTLRVLGYSGL), 121-146 (RELTLENLEVTGTALSPLLDATGPDL), 147-174 (NTLSLRNVSWATTDTWLAELQQWLKPGL), 175-198 (KVLSIAQAHSLNFSCKQVGVFPAL), 199-226 (ATLDLSDNPELGEKGLISALCPHKFPTL), 227-253 (QVLALRNAGMETTSGVCSALAAARVPL), 254-278 (QALDLSHNSLRDTAGTPSCDWPSQL), 279-299 (NSLNLSFTGLEHVPKGLPAKL), 300-321 (SVLDLSYNRLDRKPRPEELPEV), and 322-346 (GSLSLTGNPFLHSESQSEAYNSGVV). N-linked (GlcNAc...) asparagine glycans are attached at residues Asn153 and Asn186. 2 cysteine pairs are disulfide-bonded: Cys189/Cys219 and Cys243/Cys272. The N-linked (GlcNAc...) asparagine glycan is linked to Asn282. The interval 290-372 (HVPKGLPAKL…ALLLGHRLFV (83 aa)) is required for response to bacterial lipopolysaccharide (LPS). Asn342 carries the GPI-anchor amidated asparagine lipid modification. The propeptide at 343 to 372 (SGVVIATALSPGSAGLSGTLALLLGHRLFV) is removed in mature form.

As to quaternary structure, belongs to the lipopolysaccharide (LPS) receptor, a multi-protein complex containing at least CD14, LY96 and TLR4. Interacts with LPS-bound LPB. Interacts with LPAR1. Interacts with the TLR2:TLR6 or TLR2:TLR1 heterodimers; upon interaction with ligands such as diacylated lipopeptides and triacylated lipopeptides, respectively. Interacts with MYO18A. Interacts with FSTL1. In terms of tissue distribution, detected in macrophages and peripheral blood monocytes.

The protein resides in the cell membrane. It localises to the secreted. The protein localises to the membrane raft. Its subcellular location is the golgi apparatus. In terms of biological role, coreceptor for bacterial lipopolysaccharide. In concert with LBP, binds to monomeric lipopolysaccharide and delivers it to the LY96/TLR4 complex, thereby mediating the innate immune response to bacterial lipopolysaccharide (LPS). Acts via MyD88, TIRAP and TRAF6, leading to NF-kappa-B activation, cytokine secretion and the inflammatory response. Acts as a coreceptor for TLR2:TLR6 heterodimer in response to diacylated lipopeptides and for TLR2:TLR1 heterodimer in response to triacylated lipopeptides, these clusters trigger signaling from the cell surface and subsequently are targeted to the Golgi in a lipid-raft dependent pathway. Binds electronegative LDL (LDL(-)) and mediates the cytokine release induced by LDL(-). The chain is Monocyte differentiation antigen CD14 (Cd14) from Rattus norvegicus (Rat).